The following is a 333-amino-acid chain: Mycothiol acetyltransferase (333 aa).

N-acetyltransferase domains lie at 18–170 (PTLS…LPEP) and 176–333 (VTVR…AAAD). E46 is a 1D-myo-inositol 2-(L-cysteinylamino)-2-deoxy-alpha-D-glucopyranoside binding site. Position 98 to 100 (98 to 100 (IVV)) interacts with acetyl-CoA. Positions 203, 242, and 261 each coordinate 1D-myo-inositol 2-(L-cysteinylamino)-2-deoxy-alpha-D-glucopyranoside. Acetyl-CoA contacts are provided by residues 265–267 (VGV) and 272–278 (GGAGLGR). Y299 contributes to the 1D-myo-inositol 2-(L-cysteinylamino)-2-deoxy-alpha-D-glucopyranoside binding site. Residue 304 to 309 (NERAVR) participates in acetyl-CoA binding.

This sequence belongs to the acetyltransferase family. MshD subfamily. Monomer.

It carries out the reaction 1D-myo-inositol 2-(L-cysteinylamino)-2-deoxy-alpha-D-glucopyranoside + acetyl-CoA = mycothiol + CoA + H(+). Functionally, catalyzes the transfer of acetyl from acetyl-CoA to desacetylmycothiol (Cys-GlcN-Ins) to form mycothiol. This chain is Mycothiol acetyltransferase, found in Frankia alni (strain DSM 45986 / CECT 9034 / ACN14a).